The primary structure comprises 1408 residues: DNA-directed RNA polymerase subunit beta'' (1408 aa).

It belongs to the RNA polymerase beta' chain family. RpoC2 subfamily. In terms of assembly, in plastids the minimal PEP RNA polymerase catalytic core is composed of four subunits: alpha, beta, beta', and beta''. When a (nuclear-encoded) sigma factor is associated with the core the holoenzyme is formed, which can initiate transcription.

Its subcellular location is the plastid. It localises to the chloroplast. It carries out the reaction RNA(n) + a ribonucleoside 5'-triphosphate = RNA(n+1) + diphosphate. Functionally, DNA-dependent RNA polymerase catalyzes the transcription of DNA into RNA using the four ribonucleoside triphosphates as substrates. The chain is DNA-directed RNA polymerase subunit beta'' from Psilotum nudum (Whisk fern).